The sequence spans 311 residues: Putative S-adenosyl-L-methionine-dependent methyltransferase MSMEG_0095/MSMEI_0092 (311 aa).

Residues D134 and 163–164 (DL) contribute to the S-adenosyl-L-methionine site.

It belongs to the UPF0677 family.

Functionally, exhibits S-adenosyl-L-methionine-dependent methyltransferase activity. This chain is Putative S-adenosyl-L-methionine-dependent methyltransferase MSMEG_0095/MSMEI_0092, found in Mycolicibacterium smegmatis (strain ATCC 700084 / mc(2)155) (Mycobacterium smegmatis).